Here is a 579-residue protein sequence, read N- to C-terminus: Potassium-transporting ATPase potassium-binding subunit (579 aa).

10 consecutive transmembrane segments (helical) span residues 2 to 22, 66 to 86, 135 to 155, 177 to 197, 262 to 282, 292 to 312, 391 to 411, 437 to 457, 490 to 510, and 546 to 566; these read MNLV…AIPL, SFSV…IHIF, GLTV…FALI, VLYI…SQGV, LSNL…CFTF, GIAI…IIGV, VFGG…LAVF, VLVC…ASIL, FAGF…SMLF, and FIGL…FPAL.

The protein belongs to the KdpA family. In terms of assembly, the system is composed of three essential subunits: KdpA, KdpB and KdpC.

Its subcellular location is the cell membrane. In terms of biological role, part of the high-affinity ATP-driven potassium transport (or Kdp) system, which catalyzes the hydrolysis of ATP coupled with the electrogenic transport of potassium into the cytoplasm. This subunit binds the extracellular potassium ions and delivers the ions to the membrane domain of KdpB through an intramembrane tunnel. This is Potassium-transporting ATPase potassium-binding subunit from Clostridium botulinum (strain Alaska E43 / Type E3).